Here is a 371-residue protein sequence, read N- to C-terminus: DNA replication and repair protein RecF (371 aa).

An ATP-binding site is contributed by 30-37; sequence GKNGQGKT.

Belongs to the RecF family.

It localises to the cytoplasm. Its function is as follows. The RecF protein is involved in DNA metabolism; it is required for DNA replication and normal SOS inducibility. RecF binds preferentially to single-stranded, linear DNA. It also seems to bind ATP. The protein is DNA replication and repair protein RecF of Clostridioides difficile (strain 630) (Peptoclostridium difficile).